A 1359-amino-acid chain; its full sequence is Transcriptional regulator ATRX homolog (1359 aa).

Positions 1 to 402 are disordered; that stretch reads MRVGVSESED…RAEKERRKRL (402 aa). The span at 11-49 shows a compositional bias: basic and acidic residues; it reads SDGHVIEDEDLEMARQIENERKEKRAQKLKEKREREGKP. Basic residues predominate over residues 50-61; it reads PPKKRPAKKRKA. Over residues 64–73 the composition is skewed to acidic residues; the sequence is SEEDDDDEEE. Basic residues-rich tracts occupy residues 77–86, 103–123, 139–149, 165–177, 194–204, and 219–229; these read KSSKKSRKRA, KSKSKKKVDQKKKEKSKKKRT, KSKKKSKKTKK, VKKSKKNKEKSVK, KKSKKGLKKKA, and KKSKKKSKKVV. The span at 257–271 shows a compositional bias: acidic residues; that stretch reads ESSESEKSDEEEEEK. The segment covering 321–336 has biased composition (basic and acidic residues); that stretch reads KDQKSESEASDVEEKV. Low complexity predominate over residues 347–357; the sequence is SESGSDSSEGS. Residues 362-376 are compositionally biased toward basic residues; sequence RKSKKKEKPEKKKKG. The span at 383–397 shows a compositional bias: basic and acidic residues; the sequence is KLQKETIDAERAEKE. The Helicase ATP-binding domain occupies 483 to 685; sequence DRLDTEGSGG…HCMVNFVKPG (203 aa). 496 to 503 serves as a coordination point for ATP; sequence HCMGLGKT. The DEAH box motif lies at 636-639; that stretch reads DEAH. The tract at residues 809–891 is disordered; sequence RVMREDAEEE…NSDDEDEEDG (83 aa). Acidic residues predominate over residues 814 to 832; that stretch reads DAEEEADFIDDGDGSESES. A compositionally biased stretch (low complexity) spans 833–847; sequence EGSFKSGSESDSGKS. One can recognise a Helicase C-terminal domain in the interval 951-1134; it reads LLVEIIKKCE…EAQIQRHYLG (184 aa).

The protein belongs to the SNF2/RAD54 helicase family.

It is found in the nucleus. It catalyses the reaction ATP + H2O = ADP + phosphate + H(+). In terms of biological role, required for embryonic development and gonadogenesis. Also, functions redundantly with the transcriptional repressor lin-35 to regulate somatic gonad development. This is Transcriptional regulator ATRX homolog from Caenorhabditis elegans.